Reading from the N-terminus, the 427-residue chain is Enolase (427 aa).

(2R)-2-phosphoglycerate is bound at residue Gln163. The active-site Proton donor is the Glu205. Mg(2+) contacts are provided by Asp242, Glu285, and Asp312. Positions 337, 366, 367, and 388 each coordinate (2R)-2-phosphoglycerate. Lys337 (proton acceptor) is an active-site residue.

This sequence belongs to the enolase family. It depends on Mg(2+) as a cofactor.

The protein localises to the cytoplasm. The protein resides in the secreted. Its subcellular location is the cell surface. The catalysed reaction is (2R)-2-phosphoglycerate = phosphoenolpyruvate + H2O. Its pathway is carbohydrate degradation; glycolysis; pyruvate from D-glyceraldehyde 3-phosphate: step 4/5. Catalyzes the reversible conversion of 2-phosphoglycerate (2-PG) into phosphoenolpyruvate (PEP). It is essential for the degradation of carbohydrates via glycolysis. The protein is Enolase of Paraburkholderia phymatum (strain DSM 17167 / CIP 108236 / LMG 21445 / STM815) (Burkholderia phymatum).